The primary structure comprises 74 residues: Conotoxin Vt11.7 (74 aa).

Residues 1–26 (MMFRLTSVGCFLLVIVLLNVAVLTNA) form the signal peptide. Disulfide bonds link Cys28–Cys42, Cys35–Cys47, Cys41–Cys51, and Cys46–Cys55. Residues 62-74 (AHGHGLLRFWGQR) constitute a propeptide that is removed on maturation.

Belongs to the conotoxin I2 superfamily. In terms of tissue distribution, expressed by the venom duct.

The protein localises to the secreted. The polypeptide is Conotoxin Vt11.7 (Conus planorbis (Planorbis cone)).